A 1347-amino-acid polypeptide reads, in one-letter code: G-protein coupled receptor-associated sorting protein 1 (1347 aa).

Disordered regions lie at residues 1–75 (MTRA…AYAK), 145–174 (ESIPKKANSPAGFQPSYGSEEGTNMGSWYR), and 188–281 (DFKW…NSRS). Positions 21–33 (ENANAAEVEPEAP) are enriched in low complexity. Positions 211-226 (FRPRKSMKANNRFRHM) are enriched in basic residues. A compositionally biased stretch (basic and acidic residues) spans 263–278 (PKDKTKVWSKPKEEPN). Serine 295 carries the phosphoserine modification. 3 disordered regions span residues 310–344 (GEEAKSRSKPRARKGVNMRARQQAKREACSDAMSG), 364–396 (FSKSKTKKEPRTRAVPKEEVKTKARASTKQEAR), and 460–485 (QVSSFCLGSGKKSSMESGPKATSKSM). Basic residues predominate over residues 316–325 (RSKPRARKGV). The span at 370–396 (KKEPRTRAVPKEEVKTKARASTKQEAR) shows a compositional bias: basic and acidic residues. Residues 461–484 (VSSFCLGSGKKSSMESGPKATSKS) show a composition bias toward polar residues. A phosphoserine mark is found at serine 619 and serine 626. Threonine 860 is modified (phosphothreonine). A Phosphoserine modification is found at serine 862.

The protein belongs to the GPRASP family. As to quaternary structure, interacts with cytoplasmic tails of a variety of G-protein coupled receptors such as delta opioid receptor/OPRD1, beta-2 adrenergic receptor/ADRB2 and D4 dopamine receptor/DRD4 as well as D2 dopamine receptor/DRD2. Interacts with PER1. Interacts with BECN2; the interaction is direct. As to expression, expressed in the brain, with higher expression in the hippocampus, hypothalamus and olfactory bulb.

The protein localises to the cytoplasm. Functionally, modulates lysosomal sorting and functional down-regulation of a variety of G-protein coupled receptors. Targets receptors for degradation in lysosomes via its interaction with BECN2. The polypeptide is G-protein coupled receptor-associated sorting protein 1 (Gprasp1) (Mus musculus (Mouse)).